The primary structure comprises 382 residues: Heme A synthase (382 aa).

Transmembrane regions (helical) follow at residues 25-45 (GAVRAWLYLLAVLVVAMVAVG), 112-132 (LLGRIVGLVFFLPFAWFWARG), 138-158 (LLLGLLGLGLLGGLQGAIGWI), 176-196 (LALHLTTASLILAGLVWLAAG), 211-231 (VVAGLLPALVLVQIWLGGLVA), 270-290 (LALVQFNHRLFAYLVVVVAIA), 303-323 (AAAGRAMGLAALATAQMGLGI), and 327-347 (LLHVPLWAGLAHQVFAMAVLI). H277 is a binding site for heme. Residue H338 coordinates heme.

This sequence belongs to the COX15/CtaA family. Type 2 subfamily. Interacts with CtaB. The cofactor is heme b.

It is found in the cell membrane. It catalyses the reaction Fe(II)-heme o + 2 A + H2O = Fe(II)-heme a + 2 AH2. It functions in the pathway porphyrin-containing compound metabolism; heme A biosynthesis; heme A from heme O: step 1/1. Functionally, catalyzes the conversion of heme O to heme A by two successive hydroxylations of the methyl group at C8. The first hydroxylation forms heme I, the second hydroxylation results in an unstable dihydroxymethyl group, which spontaneously dehydrates, resulting in the formyl group of heme A. This Methylorubrum extorquens (strain PA1) (Methylobacterium extorquens) protein is Heme A synthase.